Here is a 676-residue protein sequence, read N- to C-terminus: Methionine--tRNA ligase (676 aa).

The short motif at 11 to 21 (PYANGPCHLGH) is the 'HIGH' region element. Cysteine 143, cysteine 146, cysteine 156, and cysteine 159 together coordinate Zn(2+). The short motif at 326-330 (KMSTS) is the 'KMSKS' region element. Threonine 329 lines the ATP pocket. The 96-residue stretch at 581-676 (EFGKVKLVVG…TEGNVGEYIK (96 aa)) folds into the tRNA-binding domain.

The protein belongs to the class-I aminoacyl-tRNA synthetase family. MetG type 1 subfamily. Homodimer. It depends on Zn(2+) as a cofactor.

It localises to the cytoplasm. The enzyme catalyses tRNA(Met) + L-methionine + ATP = L-methionyl-tRNA(Met) + AMP + diphosphate. Functionally, is required not only for elongation of protein synthesis but also for the initiation of all mRNA translation through initiator tRNA(fMet) aminoacylation. This is Methionine--tRNA ligase from Methanosphaera stadtmanae (strain ATCC 43021 / DSM 3091 / JCM 11832 / MCB-3).